A 238-amino-acid chain; its full sequence is 15,16-dihydrobiliverdin:ferredoxin oxidoreductase (238 aa).

The protein belongs to the HY2 family.

It carries out the reaction 15,16-dihydrobiliverdin + oxidized 2[4Fe-4S]-[ferredoxin] = biliverdin IXalpha + reduced 2[4Fe-4S]-[ferredoxin] + 2 H(+). In terms of biological role, catalyzes the two-electron reduction of biliverdin IX-alpha at the C15 methine bridge. This Prochlorococcus marinus (strain MIT 9211) protein is 15,16-dihydrobiliverdin:ferredoxin oxidoreductase.